The following is a 148-amino-acid chain: UPF0260 protein Maqu_1608 (148 aa).

The protein belongs to the UPF0260 family.

This chain is UPF0260 protein Maqu_1608, found in Marinobacter nauticus (strain ATCC 700491 / DSM 11845 / VT8) (Marinobacter aquaeolei).